We begin with the raw amino-acid sequence, 185 residues long: HTH-type transcriptional regulator Hpr (185 aa).

Residues 13 to 157 (AMIFSQRIAQ…LIAILRNIYG (145 aa)) enclose the HTH marR-type domain. Positions 63-86 (ISEIAKFGVMHVSTAFNFSKKLEE) form a DNA-binding region, H-T-H motif.

As to quaternary structure, homodimer.

Its function is as follows. Negative regulator of protease production and sporulation. The sequence is that of HTH-type transcriptional regulator Hpr from Bacillus cereus (strain G9842).